Reading from the N-terminus, the 319-residue chain is Protease HtpX homolog (319 aa).

The next 2 helical transmembrane spans lie at 6-26 (TAMLLAFMTVLFMAVGYVIGG) and 28-48 (GGMMIALVIAAGMNFFSYWNS). Histidine 130 contacts Zn(2+). Residue glutamate 131 is part of the active site. Position 134 (histidine 134) interacts with Zn(2+). Transmembrane regions (helical) follow at residues 145–165 (LTATLAGAISMLGNFAFFFGG) and 172–192 (PLGFIGVLIAMIVAPLAAMLV). Glutamate 201 contacts Zn(2+). A disordered region spans residues 277–319 (MARETSTGSTAPVRPDNAGRKSRSVPRTGWGRGGSEPPKGPWS).

It belongs to the peptidase M48B family. It depends on Zn(2+) as a cofactor.

It is found in the cell inner membrane. The polypeptide is Protease HtpX homolog (Rhizobium meliloti (strain 1021) (Ensifer meliloti)).